We begin with the raw amino-acid sequence, 348 residues long: D-alanine--D-alanine ligase (348 aa).

Positions 132–334 (KRVLESAGIP…YAELIEELVR (203 aa)) constitute an ATP-grasp domain. An ATP-binding site is contributed by 162–217 (EAALSYPVFVKPANMGSSVGISKAESEEELRAAILLALTYDSRILIEQGVLAREIE). Residues Asp-288, Glu-301, and Asn-303 each contribute to the Mg(2+) site.

This sequence belongs to the D-alanine--D-alanine ligase family. Requires Mg(2+) as cofactor. The cofactor is Mn(2+).

It localises to the cytoplasm. The catalysed reaction is 2 D-alanine + ATP = D-alanyl-D-alanine + ADP + phosphate + H(+). Its pathway is cell wall biogenesis; peptidoglycan biosynthesis. Cell wall formation. This is D-alanine--D-alanine ligase from Streptococcus equi subsp. zooepidemicus (strain H70).